A 203-amino-acid polypeptide reads, in one-letter code: Urease accessory protein UreG (203 aa).

Position 10-17 (10-17) interacts with GTP; the sequence is GPVGAGKT.

It belongs to the SIMIBI class G3E GTPase family. UreG subfamily. In terms of assembly, homodimer. UreD, UreF and UreG form a complex that acts as a GTP-hydrolysis-dependent molecular chaperone, activating the urease apoprotein by helping to assemble the nickel containing metallocenter of UreC. The UreE protein probably delivers the nickel.

It is found in the cytoplasm. Its function is as follows. Facilitates the functional incorporation of the urease nickel metallocenter. This process requires GTP hydrolysis, probably effectuated by UreG. This chain is Urease accessory protein UreG, found in Lachnoclostridium phytofermentans (strain ATCC 700394 / DSM 18823 / ISDg) (Clostridium phytofermentans).